Here is a 286-residue protein sequence, read N- to C-terminus: uncharacterized protein (286 aa).

The next 6 membrane-spanning stretches (helical) occupy residues 52-74 (ILWTIIVANGAILFTAHYVLIGL), 79-101 (LIAIFVVMLSGVMLYAPLAFLFL), 142-161 (WWDPLLVGFFWIAAGFVSFF), 168-190 (VLVFLLLIAPLALLSVKCPGAIL), 203-225 (IQATFLVKLAVLIFASLAAVALV), and 257-276 (IIWIAWIMLTSLGLLIASFM).

Its subcellular location is the cell membrane. This is an uncharacterized protein from Archaeoglobus fulgidus (strain ATCC 49558 / DSM 4304 / JCM 9628 / NBRC 100126 / VC-16).